The primary structure comprises 365 residues: Cobalt-precorrin-5B C(1)-methyltransferase (365 aa).

It belongs to the CbiD family.

The catalysed reaction is Co-precorrin-5B + S-adenosyl-L-methionine = Co-precorrin-6A + S-adenosyl-L-homocysteine. It functions in the pathway cofactor biosynthesis; adenosylcobalamin biosynthesis; cob(II)yrinate a,c-diamide from sirohydrochlorin (anaerobic route): step 6/10. Functionally, catalyzes the methylation of C-1 in cobalt-precorrin-5B to form cobalt-precorrin-6A. The sequence is that of Cobalt-precorrin-5B C(1)-methyltransferase from Methanococcus maripaludis (strain C6 / ATCC BAA-1332).